Here is an 800-residue protein sequence, read N- to C-terminus: Cation/H(+) antiporter 19 (800 aa).

12 consecutive transmembrane segments (helical) span residues 30–50 (FALP…RLLA), 60–77 (RVIA…SALG), 92–112 (LTVL…LVGL), 127–147 (LLIA…TSFV), 158–178 (QLPF…PVLA), 196–216 (MSAA…AIAL), 224–244 (LVSV…VVAI), 278–298 (FVTD…GIVA), 315–335 (LVSG…TDVT), 343–363 (WGLL…GTVG), 375–395 (AVTL…VLNI), and 408–428 (AILV…VMLI). A disordered region spans residues 776–800 (ADTRPLVEEDAEYDQSSRDISDLTA). The segment covering 790 to 800 (QSSRDISDLTA) has biased composition (basic and acidic residues).

Belongs to the monovalent cation:proton antiporter 2 (CPA2) transporter (TC 2.A.37) family. CHX (TC 2.A.37.4) subfamily. Expressed in the whole plant but preferentially in pollen.

It is found in the membrane. May operate as a cation/H(+) antiporter. This chain is Cation/H(+) antiporter 19 (CHX19), found in Arabidopsis thaliana (Mouse-ear cress).